The sequence spans 322 residues: tRNA dimethylallyltransferase (322 aa).

12-19 provides a ligand contact to ATP; it reads GPTAAGKT. 14 to 19 is a substrate binding site; that stretch reads TAAGKT. Interaction with substrate tRNA stretches follow at residues 37-40 and 160-164; these read DSAL and QRLIR.

It belongs to the IPP transferase family. As to quaternary structure, monomer. It depends on Mg(2+) as a cofactor.

The catalysed reaction is adenosine(37) in tRNA + dimethylallyl diphosphate = N(6)-dimethylallyladenosine(37) in tRNA + diphosphate. Its function is as follows. Catalyzes the transfer of a dimethylallyl group onto the adenine at position 37 in tRNAs that read codons beginning with uridine, leading to the formation of N6-(dimethylallyl)adenosine (i(6)A). The polypeptide is tRNA dimethylallyltransferase (Pseudomonas putida (Arthrobacter siderocapsulatus)).